Consider the following 255-residue polypeptide: Acetylglutamate kinase (255 aa).

Substrate is bound by residues G40–G41, R62, and N153.

The protein belongs to the acetylglutamate kinase family. ArgB subfamily.

Its subcellular location is the cytoplasm. It catalyses the reaction N-acetyl-L-glutamate + ATP = N-acetyl-L-glutamyl 5-phosphate + ADP. It participates in amino-acid biosynthesis; L-arginine biosynthesis; N(2)-acetyl-L-ornithine from L-glutamate: step 2/4. Functionally, catalyzes the ATP-dependent phosphorylation of N-acetyl-L-glutamate. This is Acetylglutamate kinase from Bacillus cereus (strain 03BB102).